A 114-amino-acid polypeptide reads, in one-letter code: Ribosome-binding factor A (114 aa).

Belongs to the RbfA family. As to quaternary structure, monomer. Binds 30S ribosomal subunits, but not 50S ribosomal subunits or 70S ribosomes.

The protein localises to the cytoplasm. Functionally, one of several proteins that assist in the late maturation steps of the functional core of the 30S ribosomal subunit. Associates with free 30S ribosomal subunits (but not with 30S subunits that are part of 70S ribosomes or polysomes). Required for efficient processing of 16S rRNA. May interact with the 5'-terminal helix region of 16S rRNA. The polypeptide is Ribosome-binding factor A (Macrococcus caseolyticus (strain JCSC5402) (Macrococcoides caseolyticum)).